Consider the following 378-residue polypeptide: UPF0754 membrane protein BALH_0780 (378 aa).

Transmembrane regions (helical) follow at residues 1–21 and 357–377; these read MNIWLSMLTTTGLGAIIGGFT and YLGALLGGMIGIVQGLLLLFL.

Belongs to the UPF0754 family.

It is found in the cell membrane. The chain is UPF0754 membrane protein BALH_0780 from Bacillus thuringiensis (strain Al Hakam).